The chain runs to 284 residues: MKIKEIKKVTLQPFTKWTGGKRQLLPVIRELIPKTYNRYFEPFVGGGALFFDLAPKDAVINDFNAELINCYQQIKDNPQELIEILKVHQEYNSKEYYLDLRSADRDERIDMMSEVQRAARILYMLRVNFNGLYRVNSKNQFNVPYGRYKNPKIVDEELISAISVYINNNQLEIKVGDFEKAIVDVRTGDFVYFDPPYIPLSETSAFTSYTHEGFSFADQVRLRDAFKRLSDTGAYVMLSNSSSALVEELYKDFNIHYVEATRTNGAKSSSRGKISEIIVTNYEK.

S-adenosyl-L-methionine is bound by residues tryptophan 17, lysine 21, glycine 46, aspartate 62, aspartate 177, phenylalanine 178, and aspartate 194.

The protein belongs to the N(4)/N(6)-methyltransferase family. As to quaternary structure, monomer. Homodimer.

The catalysed reaction is a 2'-deoxyadenosine in DNA + S-adenosyl-L-methionine = an N(6)-methyl-2'-deoxyadenosine in DNA + S-adenosyl-L-homocysteine + H(+). Its function is as follows. An alpha subtype methylase that recognizes the double-stranded sequence 5'-GATC-3', methylates A-2 on both strands, and protects the DNA from cleavage by the DpnII endonuclease. This Streptococcus pneumoniae protein is Type II methyltransferase M1.DpnII.